Consider the following 1332-residue polypeptide: MEVEGEVREKEARVKGRQPETEVLHGLPQEQSIFNNMQHNHQPDSDRRRLSLENLPGLYNMSCTQLLALANATVATGSSIGASSSSLSSQHPTDSWINSWKMDSNPWTLSKMQKQQYDVSTPQKFLCDLNLTPEELVSTSTQRTEPESPQITLKTPGKSLSETDHEPHDRIKKSVLGTGSPAAVKKRKIARNDEKSQLETPTLKRKKIRPKVVREGKTKKASSKAGIKKSSIAATATKTSEESNYVRPKRLTRRSIRFDFDLQEEDEEFCGIDFTSAGHVEGSSGEENLTDTTLGMFGHVPKGRRGQRRSNGFKKTDNDCLSSMLSLVNTGPGSFMESEEDRPSDSQISLGRQRSIMATRPRNFRSLKKLLQRIIPSKRDRKGCKLPRGLPKLTVASKLQLKVFRKKRSQRNRVASQFNARILDLQWRRQNPTGTSLADIWERSLTIDAITKLFEELDINKEGLCLPHNRETALILYKKSYEEQKAIVKYSKKQKPKVQLDPETSRVWKLLMSSIDCDGVDGSDEEKRKWWEEERNMFHGRANSFIARMRVVQGNRTFSPWKGSVVDSVVGVFLTQNVADHSSSSAYMDLAAEFPVEWNFNKGSCHEEWGSSVTQETILNLDPRTGVSTPRIRNPTRVIIEEIDDDENDIDAVCSQESSKTSDSSITSADQSKTMLLDPFNTVLMNEQVDSQMVKGKGHIPYTDDLNDLSQGISMVSSASTHCELNLNEVPPEVELCSHQQDPESTIQTQDQQESTRTEDVKKNRKKPTTSKPKKKSKESAKSTQKKSVDWDSLRKEAESGGRKRERTERTMDTVDWDALRCTDVHKIANIIIKRGMNNMLAERIKAFLNRLVKKHGSIDLEWLRDVPPDKAKEYLLSINGLGLKSVECVRLLSLHQIAFPVDTNVGRIAVRLGWVPLQPLPDELQMHLLELYPVLESVQKYLWPRLCKLDQKTLYELHYHMITFGKVFCTKVKPNCNACPMKAECRHYSSARASARLALPEPEESDRTSVMIHERRSKRKPVVVNFRPSLFLYQEKEQEAQRSQNCEPIIEEPASPEPEYIEHDIEDYPRDKNNVGTSEDPWENKDVIPTIILNKEAGTSHDLVVNKEAGTSHDLVVLSTYAAAIPRRKLKIKEKLRTEHHVFELPDHHSILEGFERREAEDIVPYLLAIWTPGETVNSIQPPKQRCALFESNNTLCNENKCFQCNKTREEESQTVRGTILIPCRTAMRGGFPLNGTYFQTNEVFADHDSSINPIDVPTELIWDLKRRVAYLGSSVSSICKGLSVEAIKYNFQEGYVCVRGFDRENRKPKSLVKRLHCSHVAIRTKEKTEE.

Positions 1 to 23 (MEVEGEVREKEARVKGRQPETEV) are enriched in basic and acidic residues. 3 disordered regions span residues 1 to 29 (MEVEGEVREKEARVKGRQPETEVLHGLPQ), 137 to 242 (VSTS…TSEE), and 280 to 317 (VEGSSGEENLTDTTLGMFGHVPKGRRGQRRSNGFKKTD). Over residues 137-153 (VSTSTQRTEPESPQITL) the composition is skewed to polar residues. Residues 223-236 (SKAGIKKSSIAATA) show a composition bias toward low complexity. Positions 301 to 312 (PKGRRGQRRSNG) are enriched in basic residues. Positions 497–595 (KVQLDPETSR…AYMDLAAEFP (99 aa)) are DEMETER. Residues 739-753 (HQQDPESTIQTQDQQ) are compositionally biased toward polar residues. Residues 739–810 (HQQDPESTIQ…GGRKRERTER (72 aa)) are disordered. Residues 763–777 (KNRKKPTTSKPKKKS) are compositionally biased toward basic residues. A compositionally biased stretch (basic and acidic residues) spans 787–810 (KSVDWDSLRKEAESGGRKRERTER). [4Fe-4S] cluster is bound by residues Cys-970, Cys-977, Cys-980, and Cys-986.

The protein belongs to the DNA glycosylase family. DEMETER subfamily. The cofactor is [4Fe-4S] cluster.

Its subcellular location is the nucleus. Its function is as follows. Potential transcriptional activator that may act by nicking the target promoter. Catalyzes the release of 5-methylcytosine (5-meC) from DNA by a glycosylase/lyase mechanism. This chain is DEMETER-like protein 2 (DML2), found in Arabidopsis thaliana (Mouse-ear cress).